We begin with the raw amino-acid sequence, 209 residues long: Bcl-2 homologous antagonist/killer (209 aa).

The disordered stretch occupies residues 1–28 (MASGQGPGPPKVGCDESPSPSEQQVAQD). Ala2 carries the post-translational modification N-acetylalanine. Polar residues predominate over residues 18–27 (PSPSEQQVAQ). The BH3 signature appears at 72-86 (VGRQLALIGDDINRR). The BH1 motif lies at 115–134 (SLFKSGISWGRVVALLGFGY). 2 residues coordinate Zn(2+): Asp158 and His162. The BH2 signature appears at 167–182 (RWIAQRGGWVAALNFR). A helical transmembrane segment spans residues 186-203 (ILTVMVIFGVVLLGQFVV).

Belongs to the Bcl-2 family. Homodimer. Formation of the homodimer is zinc-dependent. Forms heterodimers with BCL2 and BCL2L1 isoform Bcl-X(L). Forms heterooligomers with BAX. Interacts with BCL2A1. Interacts withRTL10/BOP. Interacts with VDAC1. Interacts with GIMAP3/IAN4 and GIMAP5/IAN5. As to quaternary structure, (Microbial infection) Interacts with gamma-herpesvirus 68 protein vBCL2. As to expression, widely expressed.

The protein localises to the mitochondrion outer membrane. Functionally, in the presence of an appropriate stimulus, accelerates programmed cell death by binding to, and antagonizing the anti-apoptotic action of BCL2. The polypeptide is Bcl-2 homologous antagonist/killer (Bak1) (Mus musculus (Mouse)).